Here is a 285-residue protein sequence, read N- to C-terminus: (3S)-malyl-CoA thioesterase (285 aa).

Arg70 and Glu122 together coordinate substrate. Residues Glu122 and Asp148 each contribute to the Mg(2+) site.

Belongs to the HpcH/HpaI aldolase family. Homodimer or homotrimer. Mg(2+) is required as a cofactor.

It carries out the reaction (S)-malyl-CoA + H2O = (S)-malate + CoA + H(+). Its function is as follows. Catalyzes the hydrolysis of (3S)-malyl-CoA to (3S)-malate and free CoA. Inactive towards beta-methylmalyl-CoA and other CoA esters. The chain is (3S)-malyl-CoA thioesterase from Cereibacter sphaeroides (strain ATCC 17025 / ATH 2.4.3) (Rhodobacter sphaeroides).